Reading from the N-terminus, the 409-residue chain is Elongation factor Tu, chloroplastic (409 aa).

The 205-residue stretch at 10 to 214 (KPHINIGTIG…AVDAYIPTPE (205 aa)) folds into the tr-type G domain. Positions 19–26 (GHVDHGKT) are G1. Residue 19–26 (GHVDHGKT) coordinates GTP. Threonine 26 contributes to the Mg(2+) binding site. Residues 60-64 (GITIN) form a G2 region. A G3 region spans residues 81-84 (DCPG). GTP-binding positions include 81–85 (DCPGH) and 136–139 (NKQD). The segment at 136-139 (NKQD) is G4. The G5 stretch occupies residues 174 to 176 (SRL).

The protein belongs to the TRAFAC class translation factor GTPase superfamily. Classic translation factor GTPase family. EF-Tu/EF-1A subfamily.

The protein resides in the plastid. It is found in the chloroplast. It carries out the reaction GTP + H2O = GDP + phosphate + H(+). Its function is as follows. GTP hydrolase that promotes the GTP-dependent binding of aminoacyl-tRNA to the A-site of ribosomes during protein biosynthesis. This Stephanocyclus meneghinianus (Diatom) protein is Elongation factor Tu, chloroplastic (tufA).